We begin with the raw amino-acid sequence, 389 residues long: Gastricsin (389 aa).

The N-terminal stretch at 1–16 (MKWMVVALVCLQLLEA) is a signal peptide. Residues 17–59 (KVTKVTLKKFKSIRENLREQGLLEDFLKTNHYDPAQKYHFGDF) constitute a propeptide, activation peptide. Residues 73-386 (YFGEISIGTP…DMGNNRVGFA (314 aa)) form the Peptidase A1 domain. Residue Asp-91 is part of the active site. Cystine bridges form between Cys-104–Cys-109 and Cys-268–Cys-272. Asp-277 is a catalytic residue. Cysteines 311 and 344 form a disulfide.

It belongs to the peptidase A1 family.

It is found in the secreted. The enzyme catalyses More restricted specificity than pepsin A, but shows preferential cleavage at Tyr-|-Xaa bonds. High activity on hemoglobin.. Functionally, hydrolyzes a variety of proteins. This Suncus murinus (Asian house shrew) protein is Gastricsin (PGC).